The chain runs to 237 residues: Urease subunit alpha (237 aa).

The segment at 1–102 (MKLTPKELDK…LVTIHTPVED (102 aa)) is urease gamma. The segment at 103–237 (NGKLAPGEVF…CGCEATKDKQ (135 aa)) is urease beta.

In the N-terminal section; belongs to the urease gamma subunit family. The protein in the C-terminal section; belongs to the urease beta subunit family. As to quaternary structure, heterohexamer of 3 UreA (alpha) and 3 UreB (beta) subunits.

The protein resides in the cytoplasm. It carries out the reaction urea + 2 H2O + H(+) = hydrogencarbonate + 2 NH4(+). It participates in nitrogen metabolism; urea degradation; CO(2) and NH(3) from urea (urease route): step 1/1. This is Urease subunit alpha from Helicobacter felis.